A 708-amino-acid polypeptide reads, in one-letter code: Metabotropic glutamate receptor-like protein L (708 aa).

An N-terminal signal peptide occupies residues methionine 1–cysteine 24. Asparagine 21, asparagine 235, asparagine 310, and asparagine 366 each carry an N-linked (GlcNAc...) asparagine glycan. At aspartate 25–methionine 370 the chain is on the extracellular side. Residues alanine 371–phenylalanine 391 traverse the membrane as a helical segment. Residues serine 392–threonine 401 are Cytoplasmic-facing. Residues isoleucine 402–tryptophan 422 traverse the membrane as a helical segment. Residues asparagine 423–lysine 435 are Extracellular-facing. Residues isoleucine 436 to leucine 456 form a helical membrane-spanning segment. The Cytoplasmic segment spans residues isoleucine 457–arginine 479. A helical membrane pass occupies residues isoleucine 480–threonine 500. The Extracellular portion of the chain corresponds to serine 501–aspartate 531. Asparagine 527 carries an N-linked (GlcNAc...) asparagine glycan. Residues isoleucine 532–alanine 552 traverse the membrane as a helical segment. Topologically, residues tryptophan 553–aspartate 568 are cytoplasmic. The helical transmembrane segment at phenylalanine 569 to glycine 589 threads the bilayer. Residues valine 590–asparagine 597 are Extracellular-facing. Residues threonine 598–alanine 618 traverse the membrane as a helical segment. Residues lysine 619–asparagine 708 lie on the Cytoplasmic side of the membrane. The tract at residues lysine 638–glutamine 681 is disordered. Residues valine 669–glutamine 681 show a composition bias toward polar residues.

The protein in the N-terminal section; belongs to the BMP lipoprotein family. It in the C-terminal section; belongs to the G-protein coupled receptor 3 family. GABA-B receptor subfamily.

It localises to the membrane. This is Metabotropic glutamate receptor-like protein L (far1) from Dictyostelium discoideum (Social amoeba).